Reading from the N-terminus, the 895-residue chain is ABC-transporter-regulating transcription factor (895 aa).

Residues 69-96 (CDMCRKKKIKCDGKMPKCSHCTNYKTDC) constitute a DNA-binding region (zn(2)-C6 fungal-type). The tract at residues 156–218 (HASGSNTPHN…QKESETEVEG (63 aa)) is disordered. A compositionally biased stretch (polar residues) spans 158–207 (SGSNTPHNPQKINIPSQSQIAMSQQNSSSHYSTPRLESQSSPRTAATSPE). A helical membrane pass occupies residues 648–668 (CVWLILYYPVSALVTLFANIL). Residues 726 to 813 (ESYSKKKRKS…TGVSTNIPPN (88 aa)) are disordered. A compositionally biased stretch (low complexity) spans 755–765 (PSTTQPTQAPS).

In terms of assembly, interacts with ncaA.

Its subcellular location is the nucleus. The protein resides in the membrane. Transcription factor that regulates expression of the genes related to ergosterol biosynthesis, including erg3B, erg24A, erg25A, as well as cyp51A that encodes a target protein of azoles. In coordination with ffmA and ncaA, is responsible for the expression of the ABC transporter abcC/cdr1B/abcG1 related to azole resistance. Directly binds both the cyp51A and abcC/cdr1B/abcG1 promoters at a conserved 34 bp region called the atrR response element (ATRE). AtrR also binds to the promoter regions of both the sterol response transcription factor srbA and atrR genes themselves, the latter suggesting the possibility that atrR is autoregulated. Also regulates iron uptake, most likely via cooperation with SrbA. AtrR is necessary for hypoxia adaptation and virulence. This is ABC-transporter-regulating transcription factor from Aspergillus fumigatus (strain ATCC MYA-4609 / CBS 101355 / FGSC A1100 / Af293) (Neosartorya fumigata).